Here is a 149-residue protein sequence, read N- to C-terminus: Protein AE7-like 2 (149 aa).

It belongs to the MIP18 family.

Functionally, may play a role in chromosome segregation through establishment of sister chromatid cohesion. Unable to complement ae7 mutants, and thus probably not involved in the cytosolic iron-sulfur assembly (CIA) pathway. The protein is Protein AE7-like 2 of Arabidopsis thaliana (Mouse-ear cress).